The following is a 380-amino-acid chain: O-phospho-L-seryl-tRNA:Cys-tRNA synthase (380 aa).

Pyridoxal 5'-phosphate-binding positions include 86–87 (AR), Asn192, and 215–217 (SGH). Position 218 is an N6-(pyridoxal phosphate)lysine (Lys218).

It belongs to the SepCysS family. As to quaternary structure, homodimer. Interacts with SepRS. It depends on pyridoxal 5'-phosphate as a cofactor.

It catalyses the reaction O-phospho-L-seryl-tRNA(Cys) + hydrogen sulfide + H(+) = L-cysteinyl-tRNA(Cys) + phosphate. Converts O-phospho-L-seryl-tRNA(Cys) (Sep-tRNA(Cys)) to L-cysteinyl-tRNA(Cys) (Cys-tRNA(Cys)). This is O-phospho-L-seryl-tRNA:Cys-tRNA synthase from Methanococcus maripaludis (strain C6 / ATCC BAA-1332).